A 115-amino-acid chain; its full sequence is NADH-ubiquinone oxidoreductase chain 3 (115 aa).

Transmembrane regions (helical) follow at residues 4–24 (LLTM…AFWL), 55–75 (FFLV…LLPI), and 84–104 (INTM…GLAY).

Belongs to the complex I subunit 3 family. As to quaternary structure, core subunit of respiratory chain NADH dehydrogenase (Complex I) which is composed of 45 different subunits. Interacts with TMEM186. Interacts with TMEM242.

It localises to the mitochondrion inner membrane. The catalysed reaction is a ubiquinone + NADH + 5 H(+)(in) = a ubiquinol + NAD(+) + 4 H(+)(out). Core subunit of the mitochondrial membrane respiratory chain NADH dehydrogenase (Complex I) which catalyzes electron transfer from NADH through the respiratory chain, using ubiquinone as an electron acceptor. Essential for the catalytic activity of complex I. This chain is NADH-ubiquinone oxidoreductase chain 3, found in Neotoma lepida (Desert woodrat).